Consider the following 455-residue polypeptide: Alcohol acyl transferase 1 allele RGb (455 aa).

Active-site proton acceptor residues include histidine 164 and asparagine 385.

This sequence belongs to the plant acyltransferase family.

Functionally, involved in the biosynthesis of volatile esters which confer ripe apple fruit flavor. Alcohol acyl transferase that can use a wide range of alcohols as substrate to produce esters. In Malus domestica (Apple), this protein is Alcohol acyl transferase 1 allele RGb.